Consider the following 346-residue polypeptide: RNA-directed DNA methylation 4 (346 aa).

The residue at position 1 (Met1) is an N-acetylmethionine. 3 stretches are compositionally biased toward acidic residues: residues 253–268 (FCDGSDESDYDSEDSN), 278–312 (PEEEEEEEEEDDDDDDDDESEEEKSEASDESDDEE), and 323–332 (GDDEFDDYAE). The interval 253 to 346 (FCDGSDESDY…YSESDEEFES (94 aa)) is disordered.

The protein belongs to the IWR1/SLC7A6OS family. Interacts with NRPD1. Associates with Pol II and Pol V complexes.

In terms of biological role, probable regulatory factor for several RNA polymerases. Effector involved in facilitation of Pol V transcription as RNA scaffold and recruitment of silencing complex to target genomic sites. The polypeptide is RNA-directed DNA methylation 4 (RDM4) (Arabidopsis thaliana (Mouse-ear cress)).